Consider the following 387-residue polypeptide: Acyl-[acyl-carrier-protein] 6-desaturase (387 aa).

A chloroplast-targeting transit peptide spans Met-1–Arg-29. 6 residues coordinate Fe cation: Glu-131, Glu-169, His-172, Glu-222, Glu-255, and His-258.

Belongs to the fatty acid desaturase type 2 family. Fe(2+) serves as cofactor.

It is found in the plastid. Its subcellular location is the chloroplast. It carries out the reaction hexadecanoyl-[ACP] + 2 reduced [2Fe-2S]-[ferredoxin] + O2 + 2 H(+) = (6Z)-hexadecenoyl-[ACP] + 2 oxidized [2Fe-2S]-[ferredoxin] + 2 H2O. It functions in the pathway lipid metabolism; fatty acid metabolism. Inhibited by KCN or H(2)O(2). In terms of biological role, delta(6) fatty acid desaturase introducing a cis double bond at carbon 6 of palmitoyl-[acyl-carrier protein](16:0-ACP), producing 16:1(6Z)-ACP. No activity with the coenzyme A ester of the fatty acid. The position of the double bond is determined by its distance from the carboxyl end of the fatty acid. Low activity with several saturated acyl-[acyl-carrier protein]s, including 14:0-ACP and 18:0-ACP. Requires reduced ferredoxin for detectable in vitro activity. This Thunbergia alata (Black-eyed Susan vine) protein is Acyl-[acyl-carrier-protein] 6-desaturase.